The chain runs to 506 residues: Lysine--tRNA ligase (506 aa).

Glu416 and Glu423 together coordinate Mg(2+).

This sequence belongs to the class-II aminoacyl-tRNA synthetase family. As to quaternary structure, homodimer. It depends on Mg(2+) as a cofactor.

It is found in the cytoplasm. The catalysed reaction is tRNA(Lys) + L-lysine + ATP = L-lysyl-tRNA(Lys) + AMP + diphosphate. The protein is Lysine--tRNA ligase (lysS) of Xylella fastidiosa (strain 9a5c).